The following is a 721-amino-acid chain: Dipeptidyl-peptidase 5 (721 aa).

Positions methionine 1 to alanine 18 are cleaved as a signal peptide. 4 N-linked (GlcNAc...) asparagine glycosylation sites follow: asparagine 75, asparagine 94, asparagine 151, and asparagine 254. A disordered region spans residues alanine 271–proline 297. Residues asparagine 380 and asparagine 450 are each glycosylated (N-linked (GlcNAc...) asparagine). Residue serine 560 is the Charge relay system of the active site. An N-linked (GlcNAc...) asparagine glycan is attached at asparagine 607. Catalysis depends on charge relay system residues aspartate 643 and histidine 675.

It belongs to the peptidase S9C family. Post-translationally, N-glycosylated. As to expression, expressed in mycelia and conidia.

Its subcellular location is the secreted. Its function is as follows. May be involved in metabolism of dipeptides or may affect host defense mechanisms. Has a substrate specificity limited to the hydrolysis of X-Ala, His-Ser, and Ser-Tyr dipeptides at a neutral pH optimum. The protein is Dipeptidyl-peptidase 5 of Aspergillus fumigatus (strain ATCC MYA-4609 / CBS 101355 / FGSC A1100 / Af293) (Neosartorya fumigata).